The chain runs to 85 residues: Beta-insect depressant toxin Lqh-dprIT3b (85 aa).

Positions 1–21 (MKLLLLLTISASMLIEGLVNA) are cleaved as a signal peptide. The LCN-type CS-alpha/beta domain occupies 22-82 (DGYIRGGDGC…EWDYETNTCG (61 aa)). 4 disulfide bridges follow: cysteine 31–cysteine 81, cysteine 35–cysteine 56, cysteine 42–cysteine 63, and cysteine 46–cysteine 65. Glycine 82 carries the glycine amide modification.

It belongs to the long (4 C-C) scorpion toxin superfamily. Sodium channel inhibitor family. Beta subfamily. Expressed by the venom gland.

It is found in the secreted. In terms of biological role, depressant insect beta-toxins cause a transient contraction paralysis followed by a slow flaccid paralysis. They bind voltage-independently at site-4 of sodium channels (Nav) and block action potentials, primarily by depolarizing the axonal membrane and suppressing the sodium current. This depressant toxin is active only on insects. It is found in a relatively small amount in the venom, and its activity on insects is 10-fold higher compared to other known depressant toxins. This Leiurus hebraeus (Hebrew deathstalker scorpion) protein is Beta-insect depressant toxin Lqh-dprIT3b.